A 165-amino-acid chain; its full sequence is U11/U12 small nuclear ribonucleoprotein 25 kDa protein (165 aa).

Positions 52–137 (MRLSVVKLDG…IRNNSQVTFM (86 aa)) constitute a Ubiquitin-like domain. The segment at 145–165 (RGRHSKRKKHRLFRSLHKTSS) is disordered.

As to quaternary structure, component of the U11/U12 snRNPs that are part of the U12-type spliceosome.

It localises to the nucleus. The chain is U11/U12 small nuclear ribonucleoprotein 25 kDa protein (SNRNP25) from Arabidopsis thaliana (Mouse-ear cress).